A 563-amino-acid chain; its full sequence is Bifunctional dihydrofolate reductase-thymidylate synthase (563 aa).

Residues 3–195 (KFNIIAAINN…ILLRFQEYSV (193 aa)) enclose the DHFR domain. 117–124 (GGGVIYDL) is an NADP(+) binding site. The interval 275–563 (YIELVKTIME…CPSISAEMIA (289 aa)) is thymidylate synthase. Residue R292 coordinates dUMP. C435 is a catalytic residue. DUMP contacts are provided by residues H436, 464–468 (QRSWD), N474, and 504–506 (HIY).

It in the N-terminal section; belongs to the dihydrofolate reductase family. In the C-terminal section; belongs to the thymidylate synthase family.

The catalysed reaction is (6S)-5,6,7,8-tetrahydrofolate + NADP(+) = 7,8-dihydrofolate + NADPH + H(+). It carries out the reaction dUMP + (6R)-5,10-methylene-5,6,7,8-tetrahydrofolate = 7,8-dihydrofolate + dTMP. The protein operates within cofactor biosynthesis; tetrahydrofolate biosynthesis; 5,6,7,8-tetrahydrofolate from 7,8-dihydrofolate: step 1/1. Bifunctional enzyme. Involved in de novo dTMP biosynthesis. Key enzyme in folate metabolism. Catalyzes an essential reaction for de novo glycine and purine synthesis, DNA precursor synthesis, and for the conversion of dUMP to dTMP. This is Bifunctional dihydrofolate reductase-thymidylate synthase from Acanthamoeba polyphaga mimivirus (APMV).